We begin with the raw amino-acid sequence, 152 residues long: Large ribosomal subunit protein bL9 (152 aa).

Belongs to the bacterial ribosomal protein bL9 family.

Binds to the 23S rRNA. In Coxiella burnetii (strain RSA 331 / Henzerling II), this protein is Large ribosomal subunit protein bL9.